We begin with the raw amino-acid sequence, 516 residues long: AMP phosphorylase (516 aa).

AMP is bound by residues glycine 169, 195–200, and threonine 204; that span reads SRAITG. The Proton donor role is filled by aspartate 257. 2 residues coordinate AMP: serine 265 and lysine 289.

This sequence belongs to the thymidine/pyrimidine-nucleoside phosphorylase family. Type 2 subfamily.

It catalyses the reaction AMP + phosphate = alpha-D-ribose 1,5-bisphosphate + adenine. The catalysed reaction is CMP + phosphate = cytosine + alpha-D-ribose 1,5-bisphosphate. The enzyme catalyses UMP + phosphate = alpha-D-ribose 1,5-bisphosphate + uracil. Catalyzes the conversion of AMP and phosphate to adenine and ribose 1,5-bisphosphate (R15P). Exhibits phosphorylase activity toward CMP and UMP in addition to AMP. Functions in an archaeal AMP degradation pathway, together with R15P isomerase and RubisCO. This Methanospirillum hungatei JF-1 (strain ATCC 27890 / DSM 864 / NBRC 100397 / JF-1) protein is AMP phosphorylase.